The primary structure comprises 609 residues: MFS siderochrome iron transporter 1 (609 aa).

Composition is skewed to basic and acidic residues over residues 1-17 (MSAL…EDNT) and 25-34 (PHEKEIHETP). The segment at 1–69 (MSALTKIREG…NDSDVPSEDV (69 aa)) is disordered. A run of 14 helical transmembrane segments spans residues 81–101 (LTWG…LFLI), 125–145 (LMTT…IPMA), 154–174 (AEGF…MAVS), 182–202 (AAQV…GVLA), 220–240 (SPYM…VIDV), 245–265 (WGFG…FLVL), 300–320 (VIGI…FNLA), 329–349 (TGYI…FGVW), 368–390 (SVVA…NYFF), 407–427 (YVNS…GFLI), 432–452 (FYKW…GLMI), 469–489 (IFIS…VLAA), 496–516 (AAAL…GGAI), and 573–593 (IRML…VPML).

The protein belongs to the major facilitator superfamily.

The protein resides in the cell membrane. Functionally, major facilitator transporter involved in extracellular siderophore uptake. Gibberella zeae produces extracellular coprogen-type siderophores as well as the intracellular siderophore ferricrocin. The role of extracellular siderophores is to supply iron to the fungus during plant infection, and the intracellular ferricrocin is required for intracellular iron distribution and storage with a crucial role in ascus and ascospore development. The polypeptide is MFS siderochrome iron transporter 1 (Gibberella zeae (strain ATCC MYA-4620 / CBS 123657 / FGSC 9075 / NRRL 31084 / PH-1) (Wheat head blight fungus)).